A 190-amino-acid chain; its full sequence is Putative hydrolase YdeN (190 aa).

Active-site charge relay system residues include serine 71, aspartate 137, and histidine 164.

Belongs to the RBBP9 family.

This is Putative hydrolase YdeN (ydeN) from Bacillus subtilis (strain 168).